We begin with the raw amino-acid sequence, 411 residues long: MQRLAMDLRMLSRELSHYLEHQVRVGFFGSGVGFSLILGFSVAYACYYLSSIAKKPQLVTGGESFSRFLQDHCPVVTETYYPTVWCWESRGQTLLRPFITSKPLVQYRNELIKTADGGQISLDWFDNDNSKHYMDASTRPTVLLLPGLTGTSKESYILHMIHLSEELGYRYVVFNNRGVAGENLLTPRTYCCSNTEDLETVIHHVHSLYPSAPFLAAGVSMGGMLLLNYLGKIGPKTPLKAAATFSVGWNTFACSESLEKPLNWLLFNYYLTTCLQSSVNKHRHMFVKQIDVDHVMKAKSIREFDKRFTSVMFGYRTIDDYYTDASPNRRLKSVGIPVLCLNSVDDVFSPSHAIPIETAKQNPNVALVLTSYGGHIGFLEGIWPRQSTYMDRVFKQFVQAMIEHGHELSSM.

A helical; Signal-anchor for type II membrane protein membrane pass occupies residues 25–45 (VGFFGSGVGFSLILGFSVAYA). The 108-residue stretch at 140-247 (PTVLLLPGLT…PLKAAATFSV (108 aa)) folds into the AB hydrolase-1 domain. Catalysis depends on charge relay system residues Ser220, Asp346, and His375.

Belongs to the AB hydrolase superfamily. AB hydrolase 4 family.

It localises to the membrane. The catalysed reaction is a 1,2-diacyl-sn-glycero-3-phosphocholine + H2O = a 1-acyl-sn-glycero-3-phosphocholine + a fatty acid + H(+). It catalyses the reaction a 1,2-diacyl-sn-glycero-3-phosphocholine + H2O = a 2-acyl-sn-glycero-3-phosphocholine + a fatty acid + H(+). It carries out the reaction 1-tetradecanoyl-2-(9Z,12Z-octadecadienoyl)-sn-glycero-3-phosphocholine + H2O = 2-(9Z,12Z-octadecadienoyl)-sn-glycero-3-phosphocholine + tetradecanoate + H(+). The enzyme catalyses 1-tetradecanoyl-2-(9Z,12Z-octadecadienoyl)-sn-glycero-3-phosphocholine + H2O = 1-tetradecanoyl-sn-glycero-3-phosphocholine + (9Z,12Z)-octadecadienoate + H(+). The catalysed reaction is 1-tetradecanoyl-2-(5Z,8Z,11Z,14Z-eicosatetraenoyl)-sn-glycero-3-phosphocholine + H2O = 2-(5Z,8Z,11Z,14Z)-eicosatetraenoyl-sn-glycero-3-phosphocholine + tetradecanoate + H(+). It catalyses the reaction 1-tetradecanoyl-2-(4Z,7Z,10Z,13Z,16Z,19Z-docosahexaenoyl)-sn-glycero-3-phosphocholine + H2O = 2-(4Z,7Z,10Z,13Z,16Z,19Z-docosahexaenoyl)-sn-glycero-3-phosphocholine + tetradecanoate + H(+). It carries out the reaction 1,2-ditetradecanoyl-sn-glycero-3-phosphocholine + H2O = 2-tetradecanoyl-sn-glycero-3-phosphocholine + tetradecanoate + H(+). The enzyme catalyses 1-octadecanoyl-2-acetyl-sn-glycero-3-phosphocholine + H2O = 1-octadecanoyl-sn-glycero-3-phosphocholine + acetate + H(+). The catalysed reaction is 1,2-ditetradecanoyl-sn-glycero-3-phosphocholine + H2O = 1-tetradecanoyl-sn-glycero-3-phosphocholine + tetradecanoate + H(+). It catalyses the reaction 1-octadecanoyl-2-pentanoyl-sn-glycero-3-phosphocholine + H2O = pentanoate + 1-octadecanoyl-sn-glycero-3-phosphocholine + H(+). It carries out the reaction 1-octadecanoyl-2-hexanoyl-sn-glycero-3-phosphocholine + H2O = hexanoate + 1-octadecanoyl-sn-glycero-3-phosphocholine + H(+). The enzyme catalyses 1-octadecanoyl-2-octanoyl-sn-glycero-3-phosphocholine + H2O = 1-octadecanoyl-sn-glycero-3-phosphocholine + octanoate + H(+). The catalysed reaction is 1-octadecanoyl-2-nonanoyl-sn-glycero-3-phosphocholine + H2O = nonanoate + 1-octadecanoyl-sn-glycero-3-phosphocholine + H(+). It catalyses the reaction 1-O-hexadecyl-2-nonadioyl-sn-glycero-3-phosphocholine + H2O = nonanedioate + 1-O-hexadecyl-sn-glycero-3-phosphocholine + H(+). It carries out the reaction 1-hexadecanoyl-2-nonadioyl-sn-glycero-3-phosphocholine + H2O = nonanedioate + 1-hexadecanoyl-sn-glycero-3-phosphocholine + H(+). The enzyme catalyses 1-hexadecanoyl-2-(9-oxononanoyl)-sn-glycero-3-phosphocholine + H2O = 9-oxononanoate + 1-hexadecanoyl-sn-glycero-3-phosphocholine + H(+). The catalysed reaction is 1-hexadecanoyl-2-(5-oxopentanoyl)-sn-glycero-3-phosphocholine + H2O = 5-oxopentanoate + 1-hexadecanoyl-sn-glycero-3-phosphocholine + H(+). It catalyses the reaction 1-hexadecanoyl-2-glutaroyl-sn-glycero-3-phosphocholine + H2O = glutarate + 1-hexadecanoyl-sn-glycero-3-phosphocholine + H(+). It carries out the reaction 1-O-hexadecyl-2-acetyl-sn-glycero-3-phosphocholine + H2O = 1-O-hexadecyl-sn-glycero-3-phosphocholine + acetate + H(+). Phospholipase that may play a role in phospholipids remodeling. May selectively cleave myristate (C14)-containing phosphatidylcholines through its predominant phospholipase 1 activity, cleaving preferentially acyl groups in sn1 position. In parallel, may have a minor phospholipase 2 activity acting on acyl groups in position sn2. In addition to (C14)-containing phosphatidylcholines, may also act on other medium-chain-containing and oxidatively truncated phospholipids. The sequence is that of Phospholipase ABHD3 from Bos taurus (Bovine).